Reading from the N-terminus, the 37-residue chain is Large ribosomal subunit protein bL36 (37 aa).

This sequence belongs to the bacterial ribosomal protein bL36 family.

This Nitratidesulfovibrio vulgaris (strain DSM 19637 / Miyazaki F) (Desulfovibrio vulgaris) protein is Large ribosomal subunit protein bL36.